Here is a 549-residue protein sequence, read N- to C-terminus: Glucose-6-phosphate isomerase (549 aa).

Lysine 80, lysine 228, and lysine 234 each carry N6-acetyllysine. The active-site Proton donor is the glutamate 355. Catalysis depends on residues histidine 386 and lysine 514.

Belongs to the GPI family.

The protein resides in the cytoplasm. It catalyses the reaction alpha-D-glucose 6-phosphate = beta-D-fructose 6-phosphate. It participates in carbohydrate biosynthesis; gluconeogenesis. The protein operates within carbohydrate degradation; glycolysis; D-glyceraldehyde 3-phosphate and glycerone phosphate from D-glucose: step 2/4. Functionally, catalyzes the reversible isomerization of glucose-6-phosphate to fructose-6-phosphate. This is Glucose-6-phosphate isomerase from Escherichia coli O139:H28 (strain E24377A / ETEC).